The primary structure comprises 315 residues: Dihydroorotate dehydrogenase (fumarate) (315 aa).

Residues Lys46, 70–74 (NSMGL), and Asn130 each bind substrate. 46 to 47 (KS) contributes to the FMN binding site. Asn130 contacts FMN. The active-site Nucleophile is Cys133. Residues Lys167 and Ile195 each contribute to the FMN site. 196–197 (NS) is a binding site for substrate. FMN-binding positions include Gly224, 252 to 253 (GG), and 274 to 275 (GT).

The protein belongs to the dihydroorotate dehydrogenase family. Type 1 subfamily. Homodimer. It depends on FMN as a cofactor.

It is found in the cytoplasm. It carries out the reaction (S)-dihydroorotate + fumarate = orotate + succinate. It functions in the pathway pyrimidine metabolism; UMP biosynthesis via de novo pathway. Its function is as follows. Catalyzes the conversion of dihydroorotate to orotate with fumarate as the electron acceptor. The chain is Dihydroorotate dehydrogenase (fumarate) (URA1) from Kluyveromyces lactis (strain ATCC 8585 / CBS 2359 / DSM 70799 / NBRC 1267 / NRRL Y-1140 / WM37) (Yeast).